A 539-amino-acid chain; its full sequence is Heparanase-like protein 2 (539 aa).

The signal sequence occupies residues 1–21 (MGFNVVVFLSCLLLLPPVTFG). 3 N-linked (GlcNAc...) asparagine glycosylation sites follow: N143, N163, and N181. E198 serves as the catalytic Proton donor. N-linked (GlcNAc...) asparagine glycosylation occurs at N300. E316 functions as the Nucleophile in the catalytic mechanism. N421 carries an N-linked (GlcNAc...) asparagine glycan.

It belongs to the glycosyl hydrolase 79 family.

It localises to the lysosome membrane. Its subcellular location is the secreted. Functionally, endoglycosidase which is a cell surface and extracellular matrix-degrading enzyme. Cleaves heparan sulfate proteoglycans (HSPGs) into heparan sulfate side chains and core proteoglycans. This chain is Heparanase-like protein 2, found in Arabidopsis thaliana (Mouse-ear cress).